Reading from the N-terminus, the 279-residue chain is uncharacterized protein (279 aa).

Residues 60 to 92 (RKANKLNNKQDSTFFNSASGETNNTILPPGVKN) are disordered. Over residues 70–85 (DSTFFNSASGETNNTI) the composition is skewed to polar residues. The next 3 membrane-spanning stretches (helical) occupy residues 156–176 (IVGY…AVMN), 202–222 (ISIF…ILFL), and 237–257 (FIWI…LLMI).

It is found in the cell membrane. This is an uncharacterized protein from Mycoplasma genitalium (strain ATCC 33530 / DSM 19775 / NCTC 10195 / G37) (Mycoplasmoides genitalium).